The primary structure comprises 828 residues: BEN domain-containing protein 3 (828 aa).

Residue Lys-20 forms a Glycyl lysine isopeptide (Lys-Gly) (interchain with G-Cter in SUMO); alternate linkage. A Glycyl lysine isopeptide (Lys-Gly) (interchain with G-Cter in SUMO1); alternate cross-link involves residue Lys-20. A Glycyl lysine isopeptide (Lys-Gly) (interchain with G-Cter in SUMO2); alternate cross-link involves residue Lys-20. Glycyl lysine isopeptide (Lys-Gly) (interchain with G-Cter in SUMO2) cross-links involve residues Lys-41, Lys-56, Lys-58, Lys-73, Lys-128, Lys-129, Lys-137, Lys-142, and Lys-158. The Nuclear localization signal signature appears at 56–58; that stretch reads KRK. Ser-164 is modified (phosphoserine). The interval 164 to 184 is disordered; it reads SPSSLRLLNEPQKRDCGSTGA. A Glycyl lysine isopeptide (Lys-Gly) (interchain with G-Cter in SUMO2) cross-link involves residue Lys-176. In terms of domain architecture, BEN 1 spans 242 to 343; it reads PPPEYQLTAA…DFFSRFWAQR (102 aa). Position 379 is a phosphoserine (Ser-379). The BEN 2 domain occupies 387–487; it reads ASDHVVDTQD…DELEGLGLDA (101 aa). Lys-427 participates in a covalent cross-link: Glycyl lysine isopeptide (Lys-Gly) (interchain with G-Cter in SUMO2). A disordered region spans residues 483 to 504; it reads LGLDAGSEGDPPRDDCYDSSSL. Ser-489 is modified (phosphoserine). Residue Lys-512 forms a Glycyl lysine isopeptide (Lys-Gly) (interchain with G-Cter in SUMO); alternate linkage. Lys-512 is covalently cross-linked (Glycyl lysine isopeptide (Lys-Gly) (interchain with G-Cter in SUMO2); alternate). Lys-528 is covalently cross-linked (Glycyl lysine isopeptide (Lys-Gly) (interchain with G-Cter in SUMO2)). A BEN 3 domain is found at 548-650; the sequence is VPGADCLLSK…ERCRRRDTEQ (103 aa). Lys-700 participates in a covalent cross-link: Glycyl lysine isopeptide (Lys-Gly) (interchain with G-Cter in SUMO2). The BEN 4 domain maps to 715 to 816; the sequence is VPSPYLLSDK…ERCRRPNRKK (102 aa).

As to quaternary structure, homooligomer, probably a homooctamer. Interacts with HDAC2 and HDAC3, but not HDAC1. Interacts with SALL4. Interacts with SMARCA5/SNF2H, BAZ2A/TIP5 and USP21. Interacts with the nucleosome remodeling and histone deacetylase (NuRD) repressor complex. Interacts (via BEN domains 1 and 3) with ERCC6L (via N-terminal TPR repeat); the interaction is direct. In terms of processing, sumoylated at Lys-20 by SUMO1 and at Lys-512 by SUMO1, SUMO2 and SUMO3. Sumoylation probably occurs sequentially, with that of Lys-20 preceding that of Lys-512. It does not alter association with heterochromatin, but is required for the repression of transcription. In terms of tissue distribution, expressed at least in heart, kidney, liver, ovary and spleen, with highest levels in spleen and lowest in heart. Expressed on the surface of T-cells.

It is found in the nucleus. Its subcellular location is the nucleolus. Transcriptional repressor which associates with the NoRC (nucleolar remodeling complex) complex and plays a key role in repressing rDNA transcription. The sumoylated form modulates the stability of the NoRC complex component BAZ2A/TIP5 by controlling its USP21-mediated deubiquitination. Binds to unmethylated major satellite DNA and is involved in the recruitment of the Polycomb repressive complex 2 (PRC2) to major satellites. Stimulates the ERCC6L translocase and ATPase activities. This Homo sapiens (Human) protein is BEN domain-containing protein 3 (BEND3).